The sequence spans 357 residues: NAD kinase 1 (357 aa).

Residue Asp-68 is the Proton acceptor of the active site. Residues 68 to 69, Arg-73, 175 to 176, Arg-186, Asp-205, Ala-240, and Gln-275 each bind NAD(+); these read DG and ND.

The protein belongs to the NAD kinase family. The cofactor is a divalent metal cation.

The protein localises to the cytoplasm. It carries out the reaction NAD(+) + ATP = ADP + NADP(+) + H(+). In terms of biological role, involved in the regulation of the intracellular balance of NAD and NADP, and is a key enzyme in the biosynthesis of NADP. Catalyzes specifically the phosphorylation on 2'-hydroxyl of the adenosine moiety of NAD to yield NADP. The sequence is that of NAD kinase 1 from Streptomyces avermitilis (strain ATCC 31267 / DSM 46492 / JCM 5070 / NBRC 14893 / NCIMB 12804 / NRRL 8165 / MA-4680).